The primary structure comprises 420 residues: Glycerol-3-phosphate dehydrogenase [NAD(+)] 2, chloroplastic (420 aa).

The transit peptide at 1–45 (MAASVQPACLDLHFSGKHPPLLKHNAIIVRCVSSPNVIPEADSIS) directs the protein to the chloroplast. NAD(+) is bound by residues 94-99 (GGGSFG), phenylalanine 171, lysine 194, and alanine 228. Lysine 194 is a binding site for substrate. The Proton acceptor role is filled by lysine 279. Residues arginine 343 and glutamate 369 each contribute to the NAD(+) site. Residue 343 to 344 (RN) participates in substrate binding.

It belongs to the NAD-dependent glycerol-3-phosphate dehydrogenase family.

It localises to the plastid. The protein localises to the chloroplast. The enzyme catalyses sn-glycerol 3-phosphate + NAD(+) = dihydroxyacetone phosphate + NADH + H(+). The protein operates within membrane lipid metabolism; glycerophospholipid metabolism. Functionally, required to supply glycerol-3-phosphate in the chloroplast for the synthesis of glycerolipids. Required for activation of systemic acquired resistance (SAR). Provision of glycerol-3-phosphate may be involved in generating lipid signals necessary for mediating defense responses and SAR. The protein is Glycerol-3-phosphate dehydrogenase [NAD(+)] 2, chloroplastic (GLY1) of Arabidopsis thaliana (Mouse-ear cress).